The primary structure comprises 458 residues: Lysine-rich nucleolar protein 1 (458 aa).

The span at methionine 1 to glutamate 14 shows a compositional bias: basic and acidic residues. Residues methionine 1–valine 21 form a disordered region. Lysine 7 is covalently cross-linked (Glycyl lysine isopeptide (Lys-Gly) (interchain with G-Cter in SUMO2)). 2 positions are modified to phosphoserine: serine 42 and serine 50. The disordered stretch occupies residues alanine 46–lysine 305. Residues valine 64–glycine 73 are compositionally biased toward basic residues. Residue lysine 101 forms a Glycyl lysine isopeptide (Lys-Gly) (interchain with G-Cter in SUMO2) linkage. Serine 111 carries the phosphoserine modification. A Glycyl lysine isopeptide (Lys-Gly) (interchain with G-Cter in SUMO2) cross-link involves residue lysine 130. Serine 132 is subject to Phosphoserine. A compositionally biased stretch (basic residues) spans glycine 145–lysine 155. Residues glutamate 173–glutamate 192 show a composition bias toward basic and acidic residues. Residues glutamine 198–isoleucine 218 show a composition bias toward basic residues. Lysine 249 participates in a covalent cross-link: Glycyl lysine isopeptide (Lys-Gly) (interchain with G-Cter in SUMO1); alternate. Lysine 249 is covalently cross-linked (Glycyl lysine isopeptide (Lys-Gly) (interchain with G-Cter in SUMO2); alternate). Serine 265 is modified (phosphoserine). Residues serine 265–lysine 274 show a composition bias toward basic residues. Residues lysine 275, lysine 287, and lysine 305 each participate in a glycyl lysine isopeptide (Lys-Gly) (interchain with G-Cter in SUMO2) cross-link. Positions glutamate 306–aspartate 458 are interaction with ZNF106. Threonine 308 and threonine 310 each carry phosphothreonine. Glycyl lysine isopeptide (Lys-Gly) (interchain with G-Cter in SUMO2) cross-links involve residues lysine 319, lysine 353, lysine 373, lysine 375, and lysine 407. The span at glutamine 336–lysine 353 shows a compositional bias: basic and acidic residues. Positions glutamine 336 to threonine 355 are disordered. Arginine 430 carries the omega-N-methylarginine modification. Residue lysine 442 forms a Glycyl lysine isopeptide (Lys-Gly) (interchain with G-Cter in SUMO2) linkage.

In terms of assembly, interacts with ZNF106.

The protein localises to the nucleus. It is found in the nucleolus. The sequence is that of Lysine-rich nucleolar protein 1 (KNOP1) from Homo sapiens (Human).